Here is a 315-residue protein sequence, read N- to C-terminus: Cytochrome c biogenesis protein CcsA (315 aa).

A run of 7 helical transmembrane segments spans residues 14–34, 72–92, 101–121, 146–166, 221–241, 255–272, and 282–302; these read VVSL…ISFW, ISNL…AQLF, IVSA…SFVL, VIMC…GVFL, SITA…VWAN, TWAL…HTRL, and AILA…VNLL.

Belongs to the CcmF/CycK/Ccl1/NrfE/CcsA family. As to quaternary structure, may interact with ccs1.

Its subcellular location is the cellular thylakoid membrane. In terms of biological role, required during biogenesis of c-type cytochromes (cytochrome c6 and cytochrome f) at the step of heme attachment. The sequence is that of Cytochrome c biogenesis protein CcsA from Prochlorococcus marinus (strain NATL1A).